The chain runs to 864 residues: A-kinase anchor protein 3 (864 aa).

Ser12 carries the post-translational modification Phosphoserine; by STK33. The PKA-RII subunit binding domain stretch occupies residues 125–138; sequence VSFYANRLTNLVIA. Disordered regions lie at residues 190-235 and 251-281; these read NISS…DKPG and AGDAKEGGRSLPGDQKLFRTSPDNRPDDFSN. Residues 204–218 show a composition bias toward polar residues; that stretch reads SGSSQAPGLRYTSTL. Phosphoserine is present on Ser206. Positions 219–235 are enriched in basic and acidic residues; that stretch reads KIKESTKEGKCPDDKPG. Ser405 carries the post-translational modification Phosphoserine. Residue Tyr406 is modified to Phosphotyrosine. The disordered stretch occupies residues 619 to 638; it reads VHEQNTQEEEIHPCERPKTP. Residues 627-638 are compositionally biased toward basic and acidic residues; that stretch reads EEIHPCERPKTP.

Belongs to the AKAP110 family. In terms of assembly, interacts with ROPN1 and ROPN1L. Interacts with QRICH2. Post-translationally, phosphorylated by STK33 during sperm flagella assembly. Phosphorylated on tyrosine.

Its subcellular location is the cytoplasmic vesicle. It is found in the secretory vesicle. The protein localises to the acrosome. The protein resides in the cell projection. It localises to the cilium. Its subcellular location is the flagellum. Its function is as follows. Structural component of sperm fibrous sheath. Required for the formation of the subcellular structure of the sperm flagellum, sperm motility and male fertility. In Mus musculus (Mouse), this protein is A-kinase anchor protein 3.